We begin with the raw amino-acid sequence, 206 residues long: Acidic proline-rich protein PRP33 (206 aa).

Positions 1-13 (MLVVLLTAALLVL) are cleaved as a signal peptide. A disordered region spans residues 15–206 (SAHGSDEEVI…EQPSYLWFSS (192 aa)). Positions 55–71 (ENGDGDDSDDGDDDGSG) are enriched in acidic residues. 6 repeat units span residues 80–97 (PPPH…HHHG), 98–115 (PPPS…NPQG), 116–133 (PPPQ…NPQG), 134–152 (PPPQ…KPQG), 153–170 (PPPQ…NPQG), and 171–189 (PPPQ…KPQD). Residues 80–189 (PPPHGGNHQR…RPPQPRKPQD (110 aa)) form a 6 X 18 AA approximate tandem repeats region. Positions 103–112 (GPQTSSQPGN) are enriched in low complexity. The segment covering 113 to 174 (PQGPPPQGGP…PGNPQGPPPQ (62 aa)) has biased composition (pro residues).

Its subcellular location is the secreted. Its function is as follows. May protect teeth by binding to tannins. This Rattus norvegicus (Rat) protein is Acidic proline-rich protein PRP33 (Prpg1).